The chain runs to 765 residues: DNA ligase (765 aa).

Residues 1-34 (MAGDDEDRAVPAAEGAPPPSALPPVSGLDVKAAE) form a disordered region. Residues 61–65 (DAEYD), 110–111 (SL), and Glu-144 each bind NAD(+). The active-site N6-AMP-lysine intermediate is the Lys-146. Arg-167, Glu-204, Lys-317, and Lys-341 together coordinate NAD(+). Zn(2+) contacts are provided by Cys-446, Cys-449, Cys-464, and Cys-470. The region spanning 687-765 (ATDSAIAGKT…EDEWLAIAQG (79 aa)) is the BRCT domain.

It belongs to the NAD-dependent DNA ligase family. LigA subfamily. The cofactor is Mg(2+). Requires Mn(2+) as cofactor.

The catalysed reaction is NAD(+) + (deoxyribonucleotide)n-3'-hydroxyl + 5'-phospho-(deoxyribonucleotide)m = (deoxyribonucleotide)n+m + AMP + beta-nicotinamide D-nucleotide.. In terms of biological role, DNA ligase that catalyzes the formation of phosphodiester linkages between 5'-phosphoryl and 3'-hydroxyl groups in double-stranded DNA using NAD as a coenzyme and as the energy source for the reaction. It is essential for DNA replication and repair of damaged DNA. This chain is DNA ligase, found in Paracoccus denitrificans (strain Pd 1222).